Reading from the N-terminus, the 441-residue chain is G2/mitotic-specific cyclin-2 (441 aa).

It belongs to the cyclin family. Cyclin AB subfamily. In terms of assembly, interacts with the CDC2 and CDK2 protein kinases to form a serine/threonine kinase holoenzyme complex. The cyclin subunit imparts substrate specificity to the complex.

In terms of biological role, essential for the control of the cell cycle at the G2/M (mitosis) transition. G2/M cyclins accumulate steadily during G2 and are abruptly destroyed at mitosis. This is G2/mitotic-specific cyclin-2 from Antirrhinum majus (Garden snapdragon).